The chain runs to 265 residues: Transcriptional repressor DcmR (265 aa).

A DNA-binding region (H-T-H motif) is located at residues leucine 17–tryptophan 36.

Monomer.

In terms of biological role, transcriptional repressor of the dcmA gene and of its own gene. The chain is Transcriptional repressor DcmR (dcmR) from Methylorubrum extorquens (strain DSM 6343 / CIP 106787 / DM4) (Methylobacterium extorquens).